The primary structure comprises 146 residues: Anti-sigma F factor (146 aa).

The protein belongs to the anti-sigma-factor family.

It carries out the reaction L-seryl-[protein] + ATP = O-phospho-L-seryl-[protein] + ADP + H(+). It catalyses the reaction L-threonyl-[protein] + ATP = O-phospho-L-threonyl-[protein] + ADP + H(+). Its function is as follows. Binds to sigma F and blocks its ability to form an RNA polymerase holoenzyme (E-sigma F). Phosphorylates SpoIIAA on a serine residue. This phosphorylation may enable SpoIIAA to act as an anti-anti-sigma factor that counteracts SpoIIAB and thus releases sigma F from inhibition. The chain is Anti-sigma F factor from Bacillus velezensis (strain DSM 23117 / BGSC 10A6 / LMG 26770 / FZB42) (Bacillus amyloliquefaciens subsp. plantarum).